We begin with the raw amino-acid sequence, 344 residues long: Heat-inducible transcription repressor HrcA (344 aa).

The protein belongs to the HrcA family.

Negative regulator of class I heat shock genes (grpE-dnaK-dnaJ and groELS operons). Prevents heat-shock induction of these operons. This chain is Heat-inducible transcription repressor HrcA, found in Streptococcus pneumoniae (strain ATCC 700669 / Spain 23F-1).